Consider the following 138-residue polypeptide: Rapid alkalinization factor 23 (138 aa).

A signal peptide spans 1 to 28 (MRGLSRNSGAAAIFAILLILAVHNWSVA). Residues 29–88 (VSSQSTEFAGDFPPFETECRGTIAECSVSAALGDGGDLFYGGGEMGEEFEMDSEINRRIL) constitute a propeptide, removed in mature form. Cystine bridges form between cysteine 106–cysteine 116 and cysteine 129–cysteine 135.

It belongs to the plant rapid alkalinization factor (RALF) family. Proteolytically cleaved, probably by SBT6.1 (S1P), a subtilisin-like serine protease (subtilase).

It localises to the secreted. Cell signaling peptide that may regulate plant stress, growth, and development. Mediates a rapid alkalinization of extracellular space by mediating a transient increase in the cytoplasmic Ca(2+) concentration leading to a calcium-dependent signaling events through a cell surface receptor and a concomitant activation of some intracellular mitogen-activated protein kinases. Negatively regulates brassinolide (BL)-mediated signaling pathway (e.g. BL-induced hypocotyl elongation and branching limitation). The polypeptide is Rapid alkalinization factor 23 (RALF23) (Arabidopsis thaliana (Mouse-ear cress)).